The chain runs to 338 residues: Mitoferrin-1 (338 aa).

Residues Met-1–Ser-42 are disordered. The segment covering Arg-15 to Gly-26 has biased composition (basic and acidic residues). Solcar repeat units lie at residues Ala-43–Thr-131, Asn-141–Gln-225, and Tyr-232–Phe-326. The next 6 helical transmembrane spans lie at Val-45–Tyr-64, Gly-106–Tyr-125, His-143–Asn-162, Ser-200–Tyr-219, Pro-234–Thr-253, and Gly-301–Tyr-320.

Belongs to the mitochondrial carrier (TC 2.A.29) family. As to quaternary structure, interacts with ACB10; this interaction stabilizes SLC25A37 and enhances the function of SLC25A37 to import mitochondrial iron during erythroid differentiation.

It localises to the mitochondrion inner membrane. The enzyme catalyses Fe(2+)(in) = Fe(2+)(out). Functionally, mitochondrial iron transporter that specifically mediates iron uptake in developing erythroid cells, thereby playing an essential role in heme biosynthesis. This Homo sapiens (Human) protein is Mitoferrin-1 (SLC25A37).